The following is a 323-amino-acid chain: 1D-myo-inositol 2-acetamido-2-deoxy-alpha-D-glucopyranoside deacetylase (323 aa).

Zn(2+)-binding residues include H28, D31, and H163.

The protein belongs to the MshB deacetylase family. Zn(2+) serves as cofactor.

The catalysed reaction is 1D-myo-inositol 2-acetamido-2-deoxy-alpha-D-glucopyranoside + H2O = 1D-myo-inositol 2-amino-2-deoxy-alpha-D-glucopyranoside + acetate. Its function is as follows. Catalyzes the deacetylation of 1D-myo-inositol 2-acetamido-2-deoxy-alpha-D-glucopyranoside (GlcNAc-Ins) in the mycothiol biosynthesis pathway. This is 1D-myo-inositol 2-acetamido-2-deoxy-alpha-D-glucopyranoside deacetylase from Streptomyces scabiei (strain 87.22).